We begin with the raw amino-acid sequence, 108 residues long: Monothiol bacilliredoxin BrxC (108 aa).

The residue at position 31 (Cys-31) is an S-bacillithiol cysteine disulfide.

As to quaternary structure, interacts with AbrB, BdhA, Bdr, BrxB, FolD, GapA, GapB, GatA, PfkA, PyrAA, PyrAB, PyrE, PyrG, PyrH, RpsB, RpsK, RpsL, SalA, SucC, Tuf and YtsJ. In terms of processing, cys can react with bacillithiol (BSH) to form mixed disulfides. S-bacillithiolation protects Cys residues against overoxidation by acting as a redox switch in response to oxidative stress.

Functionally, S-bacillithiolation is the formation of mixed disulfide bonds between protein thiols and the general thiol reductant bacillithiol (BSH) under oxidative stress. BSH is an equivalent of glutathione (GSH) in Firmicutes. This protein is a monothiol bacilliredoxin, which debacillithiolates (removes BSH) the S-bacillithiolated glyceraldehyde-3-phosphate dehydrogenases (GAPDHs) GapA and GapB in vivo and probably a number of other oxidized cytosolic proteins. Debacillithiolates the S-bacillithiolated Bdr (Bdr-SSB) and BrxB (BrxB-SSB) in vitro. Involved in maintaining redox homeostasis in response to disulfide stress conditions. This Bacillus subtilis (strain 168) protein is Monothiol bacilliredoxin BrxC.